An 877-amino-acid chain; its full sequence is Alanine--tRNA ligase (877 aa).

Residues His556, His560, Cys657, and His661 each contribute to the Zn(2+) site.

Belongs to the class-II aminoacyl-tRNA synthetase family. Zn(2+) is required as a cofactor.

The protein localises to the cytoplasm. It catalyses the reaction tRNA(Ala) + L-alanine + ATP = L-alanyl-tRNA(Ala) + AMP + diphosphate. Functionally, catalyzes the attachment of alanine to tRNA(Ala) in a two-step reaction: alanine is first activated by ATP to form Ala-AMP and then transferred to the acceptor end of tRNA(Ala). Also edits incorrectly charged Ser-tRNA(Ala) and Gly-tRNA(Ala) via its editing domain. In Wolbachia pipientis wMel, this protein is Alanine--tRNA ligase.